We begin with the raw amino-acid sequence, 334 residues long: MNHPLRIHEIRLPWKHTPMNPHYAFVREQIVALLNELGLCEEEKEKDRRDGVITMGAYIYPDAGPNELLFGTLFVLWLFFFDDIFDESKFLKGESSQAAERTLQMFRTRQPPVNATTGLSMGIVQLEKLLLRIFKMAKDLAHGPYVISRFMETCEFYITEGAIPMDKFRFRKELPKLDEYLAVRTIDGAGEACIVCSEIVAHLALPEHIINEPRIKRMREITGQQIVYSNDIYSYHREKIHNNSVNALNIRCLTKSFNDALTDQINQVNEWVLEFEALKNSLYESTLWENNLDVYITGMENTMMGCKIWSESCTRYDLNALLHITPDKNEFPER.

Mg(2+) is bound by residues Asp82 and Asp86. The D(D/E)XX(D/E) motif motif lies at 82–86 (DDIFD). Substrate is bound at residue Arg184. 3 residues coordinate Mg(2+): Asn230, Ser234, and Glu238. The short motif at 230–238 (NDIYSYHRE) is the NSE motif element. The WxxxxxRY motif motif lies at 309–316 (WSESCTRY).

This sequence belongs to the terpene synthase family. Mg(2+) is required as a cofactor.

The enzyme catalyses (2E,6E)-farnesyl diphosphate = gamma-muurolene + diphosphate. It carries out the reaction (2E,6E)-farnesyl diphosphate = alpha-muurolene + diphosphate. It catalyses the reaction (2E,6E)-farnesyl diphosphate = (-)-(E)-beta-caryophyllene + diphosphate. The catalysed reaction is (2E)-geranyl diphosphate = beta-myrcene + diphosphate. In terms of biological role, terpene synthase that catalyzes the cyclization of farnesyl diphosphate (FPP) into a mixture of sesquiterpenes with gamma-muurolene as the most abundant compound and (-)-beta-caryophyllene, alpha-muurolene, and 4 unidentified sesquiterpenes as minor compoundss. TPS1 also shows monoterpene synthase activity and can also use geranyl diphosphate (GPP) as a substrate to convert it into a mixture of cyclic and acyclic monoterpenes, including myrcene and linalool. P.polycephalum has a unique biology and these volatile terpenoids could function in internal communication of P.polycephalum, to mark the territory that have been explored, or they may be involved in chemotaxis. This chain is Terpene synthase 1, found in Physarum polycephalum (Slime mold).